The sequence spans 399 residues: Vitamin K-dependent protein Z (399 aa).

The first 22 residues, 1–22, serve as a signal peptide directing secretion; that stretch reads MAGCILLLRGFILTLILHQVEL. The propeptide occupies 23–40; sequence SVFLPAPKANNVLRRWRR. The Gla domain occupies 41–86; that stretch reads GSSYFLEEIFQGNLEKECYEEVCNYEEAREVFENDVITDEFWRQYG. Residues E47, E48, E55, E57, E60, E61, E66, E67, E70, E73, and E80 each carry the 4-carboxyglutamate modification. C58 and C63 are disulfide-bonded. EGF-like domains lie at 87–123 and 125–166; these read GGSP…KTCA and AKNE…KSCG. Cystine bridges form between C91-C102, C96-C111, C113-C122, C129-C141, C137-C150, C152-C165, and C208-C224. Residue N99 is glycosylated (N-linked (GlcNAc...) asparagine). D104 carries the (3R)-3-hydroxyaspartate modification. The Peptidase S1 domain maps to 172-399; sequence ACGALTSEHI…YSMWFKQIMK (228 aa). N230, N305, and N331 each carry an N-linked (GlcNAc...) asparagine glycan. A disulfide bridge links C326 with C340.

This sequence belongs to the peptidase S1 family. Post-translationally, the iron and 2-oxoglutarate dependent 3-hydroxylation of aspartate and asparagine is (R) stereospecific within EGF domains. In terms of tissue distribution, plasma.

Its subcellular location is the secreted. Functionally, appears to assist hemostasis by binding thrombin and promoting its association with phospholipid vesicles. Inhibits activity of the coagulation protease factor Xa in the presence of SERPINA10, calcium and phospholipids. The protein is Vitamin K-dependent protein Z (Proz) of Mus musculus (Mouse).